Reading from the N-terminus, the 432-residue chain is Enolase (432 aa).

(2R)-2-phosphoglycerate is bound at residue glutamine 167. The active-site Proton donor is the glutamate 209. Mg(2+) contacts are provided by aspartate 246, glutamate 291, and aspartate 318. 4 residues coordinate (2R)-2-phosphoglycerate: lysine 343, arginine 372, serine 373, and lysine 394. Residue lysine 343 is the Proton acceptor of the active site.

This sequence belongs to the enolase family. In terms of assembly, component of the RNA degradosome, a multiprotein complex involved in RNA processing and mRNA degradation. It depends on Mg(2+) as a cofactor.

It is found in the cytoplasm. Its subcellular location is the secreted. The protein resides in the cell surface. It carries out the reaction (2R)-2-phosphoglycerate = phosphoenolpyruvate + H2O. The protein operates within carbohydrate degradation; glycolysis; pyruvate from D-glyceraldehyde 3-phosphate: step 4/5. Its function is as follows. Catalyzes the reversible conversion of 2-phosphoglycerate (2-PG) into phosphoenolpyruvate (PEP). It is essential for the degradation of carbohydrates via glycolysis. The polypeptide is Enolase (Aliivibrio fischeri (strain MJ11) (Vibrio fischeri)).